The chain runs to 348 residues: Small ribosomal subunit biogenesis GTPase RsgA (348 aa).

Residues 72–230 (RNQLSRPAIA…IADTPGFNQP (159 aa)) form the CP-type G domain. Residues 121–124 (TKAD) and 172–180 (GPSGVGKSS) contribute to the GTP site. Cys255, Cys260, His262, and Cys268 together coordinate Zn(2+). Basic and acidic residues predominate over residues 305 to 322 (AKSDRQGQQRLEPLLDAK). A disordered region spans residues 305-348 (AKSDRQGQQRLEPLLDAKKYRRRSRRQQHQHVNPMAEEVLDSEW). The segment covering 323-333 (KYRRRSRRQQH) has biased composition (basic residues).

Belongs to the TRAFAC class YlqF/YawG GTPase family. RsgA subfamily. Monomer. Associates with 30S ribosomal subunit, binds 16S rRNA. Requires Zn(2+) as cofactor.

The protein resides in the cytoplasm. In terms of biological role, one of several proteins that assist in the late maturation steps of the functional core of the 30S ribosomal subunit. Helps release RbfA from mature subunits. May play a role in the assembly of ribosomal proteins into the subunit. Circularly permuted GTPase that catalyzes slow GTP hydrolysis, GTPase activity is stimulated by the 30S ribosomal subunit. This is Small ribosomal subunit biogenesis GTPase RsgA from Thermosynechococcus vestitus (strain NIES-2133 / IAM M-273 / BP-1).